Reading from the N-terminus, the 178-residue chain is Orotate phosphoribosyltransferase (178 aa).

5-phospho-alpha-D-ribose 1-diphosphate-binding positions include Arg-92, Lys-93, Lys-96, and 118 to 126 (EDVITTGSS). The orotate site is built by Thr-122 and Arg-150.

It belongs to the purine/pyrimidine phosphoribosyltransferase family. PyrE subfamily. In terms of assembly, homodimer. Mg(2+) serves as cofactor.

The enzyme catalyses orotidine 5'-phosphate + diphosphate = orotate + 5-phospho-alpha-D-ribose 1-diphosphate. It functions in the pathway pyrimidine metabolism; UMP biosynthesis via de novo pathway; UMP from orotate: step 1/2. Functionally, catalyzes the transfer of a ribosyl phosphate group from 5-phosphoribose 1-diphosphate to orotate, leading to the formation of orotidine monophosphate (OMP). This is Orotate phosphoribosyltransferase from Archaeoglobus fulgidus (strain ATCC 49558 / DSM 4304 / JCM 9628 / NBRC 100126 / VC-16).